The sequence spans 418 residues: Gamma-glutamyl phosphate reductase (418 aa).

It belongs to the gamma-glutamyl phosphate reductase family.

The protein localises to the cytoplasm. It catalyses the reaction L-glutamate 5-semialdehyde + phosphate + NADP(+) = L-glutamyl 5-phosphate + NADPH + H(+). It functions in the pathway amino-acid biosynthesis; L-proline biosynthesis; L-glutamate 5-semialdehyde from L-glutamate: step 2/2. Its function is as follows. Catalyzes the NADPH-dependent reduction of L-glutamate 5-phosphate into L-glutamate 5-semialdehyde and phosphate. The product spontaneously undergoes cyclization to form 1-pyrroline-5-carboxylate. The chain is Gamma-glutamyl phosphate reductase from Geotalea daltonii (strain DSM 22248 / JCM 15807 / FRC-32) (Geobacter daltonii).